The following is a 244-amino-acid chain: MTSEKSQVLFPGAAPQVTTDLSNNVVLTTVNDLYNWAKMSSLWPLLYGTACCFIEFAAMLGSRFDFDRFGLLPRSSPRTADLIITAGTVTMKMAPALVKLYQQMAEPKYVIAMGACTISGGMFSSDSYTAVRGVDKLIPVDVYIPGCPPRPEAIMDAIVKLRKKIAAEDMRERGRLQQTHRYYTVKHNLKPVPEIITGKYLESETRQAPPPELAAAIGLPVPPALQTADFKQAEQQLKALQGGV.

Positions 51, 52, 116, and 147 each coordinate [4Fe-4S] cluster.

Belongs to the complex I 20 kDa subunit family. In terms of assembly, NDH-1 can be composed of about 15 different subunits; different subcomplexes with different compositions have been identified which probably have different functions. [4Fe-4S] cluster serves as cofactor.

It is found in the cellular thylakoid membrane. It catalyses the reaction a plastoquinone + NADH + (n+1) H(+)(in) = a plastoquinol + NAD(+) + n H(+)(out). The catalysed reaction is a plastoquinone + NADPH + (n+1) H(+)(in) = a plastoquinol + NADP(+) + n H(+)(out). NDH-1 shuttles electrons from an unknown electron donor, via FMN and iron-sulfur (Fe-S) centers, to quinones in the respiratory and/or the photosynthetic chain. The immediate electron acceptor for the enzyme in this species is believed to be plastoquinone. Couples the redox reaction to proton translocation, and thus conserves the redox energy in a proton gradient. Cyanobacterial NDH-1 also plays a role in inorganic carbon-concentration. This Synechococcus sp. (strain JA-2-3B'a(2-13)) (Cyanobacteria bacterium Yellowstone B-Prime) protein is NAD(P)H-quinone oxidoreductase subunit K.